Reading from the N-terminus, the 350-residue chain is C5a anaphylatoxin chemotactic receptor 1 (350 aa).

The Extracellular portion of the chain corresponds to 1–37 (MDSFDYTTPDYGHYDDKDTLDLNTPVDKTSNTLRVPD). A required for CHIPS binding region spans residues 10–18 (DYGHYDDKD). 2 positions are modified to sulfotyrosine: tyrosine 11 and tyrosine 14. The interval 21-30 (DLNTPVDKTS) is involved in C5a binding. The helical transmembrane segment at 38–64 (ILALVIFAVVFLVGVLGNALVVWVTAF) threads the bilayer. The Cytoplasmic portion of the chain corresponds to 65–69 (EAKRT). A helical transmembrane segment spans residues 70–93 (INAIWFLNLAVADFLSCLALPILF). At 94–110 (TSIVQHHHWPFGGAACS) the chain is on the extracellular side. An intrachain disulfide couples cysteine 109 to cysteine 188. Residues 111-132 (ILPSLILLNMYASILLLATISA) traverse the membrane as a helical segment. At 133–153 (DRFLLVFKPIWCQNFRGAGLA) the chain is on the cytoplasmic side. The chain crosses the membrane as a helical span at residues 154–174 (WIACAVAWGLALLLTIPSFLY). At 175-200 (RVVREEYFPPKVLCGVDYSHDKRRER) the chain is on the extracellular side. Residues 201–226 (AVAIVRLVLGFLWPLLTLMICYTFIL) form a helical membrane-spanning segment. The Cytoplasmic portion of the chain corresponds to 227-242 (LRTWSRRATRSTKTLK). Residues 243–265 (VVVAVVASFFIFWLPYQVTGIMM) traverse the membrane as a helical segment. Topologically, residues 266–282 (SFLEPSSPTFRLLKKLD) are extracellular. The helical transmembrane segment at 283–303 (SLCVSFAYINCCINPIIYVVA) threads the bilayer. At 304 to 350 (GQGFQGRLQKSLPSLLRNVLTEESVVRESKSFARSTVDTMADKTQAV) the chain is on the cytoplasmic side. 6 positions are modified to phosphoserine: serine 314, serine 317, serine 327, serine 332, serine 334, and serine 338.

This sequence belongs to the G-protein coupled receptor 1 family. In terms of assembly, homodimer. May also form higher-order oligomers. Interacts (when phosphorylated) with ARRB1 and ARRB2; the interaction is associated with internalization of C5aR. Interacts (via N-terminal domain) with S.aureus chemotaxis inhibitory protein (CHIPS); the interaction blocks the receptor and may thus inhibit the immune response. Sulfation plays a critical role in the association of C5aR with C5a, but no significant role in the ability of the receptor to transduce a signal and mobilize calcium in response to a small peptide agonist. Sulfation at Tyr-14 is important for CHIPS binding. Post-translationally, phosphorylated on serine residues in response to C5a binding, resulting in internalization of the receptor and short-term desensitization to C5a.

The protein localises to the cell membrane. It localises to the cytoplasmic vesicle. In terms of biological role, receptor for the chemotactic and inflammatory peptide anaphylatoxin C5a. The ligand interacts with at least two sites on the receptor: a high-affinity site on the extracellular N-terminus, and a second site in the transmembrane region which activates downstream signaling events. Receptor activation stimulates chemotaxis, granule enzyme release, intracellular calcium release and superoxide anion production. The protein is C5a anaphylatoxin chemotactic receptor 1 (C5AR1) of Pan troglodytes (Chimpanzee).